We begin with the raw amino-acid sequence, 369 residues long: Anhydro-N-acetylmuramic acid kinase (369 aa).

12–19 is a binding site for ATP; sequence GTSLDGVD.

This sequence belongs to the anhydro-N-acetylmuramic acid kinase family.

It catalyses the reaction 1,6-anhydro-N-acetyl-beta-muramate + ATP + H2O = N-acetyl-D-muramate 6-phosphate + ADP + H(+). It participates in amino-sugar metabolism; 1,6-anhydro-N-acetylmuramate degradation. It functions in the pathway cell wall biogenesis; peptidoglycan recycling. Catalyzes the specific phosphorylation of 1,6-anhydro-N-acetylmuramic acid (anhMurNAc) with the simultaneous cleavage of the 1,6-anhydro ring, generating MurNAc-6-P. Is required for the utilization of anhMurNAc either imported from the medium or derived from its own cell wall murein, and thus plays a role in cell wall recycling. The protein is Anhydro-N-acetylmuramic acid kinase of Shigella flexneri.